Consider the following 239-residue polypeptide: Ribosomal RNA small subunit methyltransferase G (239 aa).

S-adenosyl-L-methionine contacts are provided by residues glycine 77, phenylalanine 82, 128 to 129, and arginine 146; that span reads AE. A disordered region spans residues 215–239; sequence DKKRQTPKKYPRKPGTPNKTPLLEK.

Belongs to the methyltransferase superfamily. RNA methyltransferase RsmG family.

It is found in the cytoplasm. Its function is as follows. Specifically methylates the N7 position of guanine in position 535 of 16S rRNA. This Staphylococcus aureus (strain USA300) protein is Ribosomal RNA small subunit methyltransferase G.